We begin with the raw amino-acid sequence, 98 residues long: NADH-ubiquinone oxidoreductase chain 4L (98 aa).

The next 3 membrane-spanning stretches (helical) occupy residues 1–21, 29–49, and 61–81; these read MSLV…GLLM, SLLC…LTIL, and IILL…LVMV.

This sequence belongs to the complex I subunit 4L family. Core subunit of respiratory chain NADH dehydrogenase (Complex I) which is composed of 45 different subunits.

The protein resides in the mitochondrion inner membrane. It catalyses the reaction a ubiquinone + NADH + 5 H(+)(in) = a ubiquinol + NAD(+) + 4 H(+)(out). Functionally, core subunit of the mitochondrial membrane respiratory chain NADH dehydrogenase (Complex I) which catalyzes electron transfer from NADH through the respiratory chain, using ubiquinone as an electron acceptor. Part of the enzyme membrane arm which is embedded in the lipid bilayer and involved in proton translocation. The sequence is that of NADH-ubiquinone oxidoreductase chain 4L (MT-ND4L) from Elaphodus cephalophus (Tufted deer).